Here is a 122-residue protein sequence, read N- to C-terminus: S-adenosylmethionine decarboxylase proenzyme (122 aa).

Catalysis depends on Ser-69, which acts as the Schiff-base intermediate with substrate; via pyruvic acid. Ser-69 carries the post-translational modification Pyruvic acid (Ser); by autocatalysis. The active-site Proton acceptor; for processing activity is His-74. The active-site Proton donor; for catalytic activity is Cys-89.

This sequence belongs to the prokaryotic AdoMetDC family. Type 1 subfamily. In terms of assembly, heterotetramer of two alpha and two beta chains arranged as a dimer of alpha/beta heterodimers. Pyruvate serves as cofactor. In terms of processing, is synthesized initially as an inactive proenzyme. Formation of the active enzyme involves a self-maturation process in which the active site pyruvoyl group is generated from an internal serine residue via an autocatalytic post-translational modification. Two non-identical subunits are generated from the proenzyme in this reaction, and the pyruvate is formed at the N-terminus of the alpha chain, which is derived from the carboxyl end of the proenzyme. The post-translation cleavage follows an unusual pathway, termed non-hydrolytic serinolysis, in which the side chain hydroxyl group of the serine supplies its oxygen atom to form the C-terminus of the beta chain, while the remainder of the serine residue undergoes an oxidative deamination to produce ammonia and the pyruvoyl group blocking the N-terminus of the alpha chain.

The enzyme catalyses S-adenosyl-L-methionine + H(+) = S-adenosyl 3-(methylsulfanyl)propylamine + CO2. Its pathway is amine and polyamine biosynthesis; S-adenosylmethioninamine biosynthesis; S-adenosylmethioninamine from S-adenosyl-L-methionine: step 1/1. Catalyzes the decarboxylation of S-adenosylmethionine to S-adenosylmethioninamine (dcAdoMet), the propylamine donor required for the synthesis of the polyamines spermine and spermidine from the diamine putrescine. The chain is S-adenosylmethionine decarboxylase proenzyme from Sulfurisphaera tokodaii (strain DSM 16993 / JCM 10545 / NBRC 100140 / 7) (Sulfolobus tokodaii).